The sequence spans 334 residues: Small ribosomal subunit protein uS2 (334 aa).

Belongs to the universal ribosomal protein uS2 family.

The chain is Small ribosomal subunit protein uS2 from Rhodopseudomonas palustris (strain BisB18).